We begin with the raw amino-acid sequence, 117 residues long: cAMP-regulated phosphoprotein 19-A (117 aa).

The span at methionine 1–leucine 37 shows a compositional bias: basic and acidic residues. A disordered region spans residues methionine 1–leucine 54. Serine 28 is subject to Phosphoserine; by CDK2. Serine 67 bears the Phosphoserine; by GWL mark. Residues lysine 78–glycine 117 are disordered. At threonine 99 the chain carries Phosphothreonine; by CDK2. Serine 109 bears the Phosphoserine; by PKA mark.

The protein belongs to the endosulfine family. Interacts (when phosphorylated at Ser-67) with ppp2r2d. Post-translationally, phosphorylation at Ser-67 by gwl during mitosis is essential for interaction with ppp2r2d (PR55-delta) and subsequent inactivation of PP2A. Phosphorylated by PKA.

The protein resides in the cytoplasm. In terms of biological role, protein phosphatase inhibitor that specifically inhibits protein phosphatase 2A (PP2A) during mitosis. When phosphorylated at Ser-67 during mitosis, specifically interacts with ppp2r2d (PR55-delta) and inhibits its activity, leading to inactivation of PP2A, an essential condition to keep cyclin-B1-CDK1 activity high during M phase. This Xenopus laevis (African clawed frog) protein is cAMP-regulated phosphoprotein 19-A (arpp19-a).